A 152-amino-acid polypeptide reads, in one-letter code: Complexin (152 aa).

The segment at M1–K119 is disordered. Over residues D23–A39 the composition is skewed to acidic residues. Basic and acidic residues-rich tracts occupy residues E41–E82 and D90–L104. The tract at residues E59–L75 is interaction with the SNARE complex. C149 bears the Cysteine methyl ester mark. A lipid anchor (S-farnesyl cysteine) is attached at C149. A propeptide spans S150 to Q152 (removed in mature form).

This sequence belongs to the complexin/synaphin family. Binds to the SNARE core complex containing SNAP25, synaptobrevin and syntaxin-1.

It is found in the membrane. It localises to the cytoplasm. The protein localises to the cytosol. In terms of biological role, positively regulates a late step in synaptic vesicle exocytosis. The protein is Complexin (cpx) of Doryteuthis pealeii (Longfin inshore squid).